A 310-amino-acid polypeptide reads, in one-letter code: Olfactory receptor 5P52 (310 aa).

Residues 1–25 (MEAENHTTVAELIILGLTEDPKLCI) are Extracellular-facing. N5 is a glycosylation site (N-linked (GlcNAc...) asparagine). The chain crosses the membrane as a helical span at residues 26–46 (VFFVIFLGVYIITLVGNISII). Residues 47–54 (TLIRISSQ) are Cytoplasmic-facing. The chain crosses the membrane as a helical span at residues 55–75 (LHTPMYLFLSHLAFVDIVFST). Topologically, residues 76–99 (SVSVIMLMELLGHGLVLSVATCAA) are extracellular. Residues C97 and C189 are joined by a disulfide bond. Residues 100–120 (QLCMTVSFGSAECFLLAAMAY) form a helical membrane-spanning segment. The Cytoplasmic segment spans residues 121–133 (DRYVAICSPLLYS). A helical transmembrane segment spans residues 134–154 (TLMSSRVCFLLLGISYVGGFV). At 155-196 (NGWTFTGCVLSLSFCGPTQINHFFCDFSPLLKVSCSDVSIIG) the chain is on the extracellular side. Residues 197 to 217 (IIPSISSGSIIVVTVFVIAVS) traverse the membrane as a helical segment. The Cytoplasmic portion of the chain corresponds to 218-237 (YIYILITILKMRSTEGRHKA). Residues 238-258 (FSTCTSHLTAVTLFYGTITVI) form a helical membrane-spanning segment. The Extracellular portion of the chain corresponds to 259 to 271 (YVMPKSSYSTEQN). The helical transmembrane segment at 272–292 (KVISLFYTVVIPMLNPLIYSL) threads the bilayer. The Cytoplasmic portion of the chain corresponds to 293–310 (RNRDVKDALRKAIVRVYS).

This sequence belongs to the G-protein coupled receptor 1 family.

It localises to the cell membrane. In terms of biological role, potential odorant receptor. This Mus musculus (Mouse) protein is Olfactory receptor 5P52.